Here is a 420-residue protein sequence, read N- to C-terminus: Hemojuvelin (420 aa).

An N-terminal signal peptide occupies residues 1-32; that stretch reads MGQSPSPRSPHGSPPTLSTLTLLLLLCGQAHS. A Phosphotyrosine modification is found at Y43. N-linked (GlcNAc...) asparagine glycosylation is present at N111. The disordered stretch occupies residues 113-135; the sequence is SRQGPTAPPPARGPALPGAGPAP. Low complexity predominate over residues 125-134; the sequence is GPALPGAGPA. 2 disulfides stabilise this stretch: C141-C223 and C160-C310. N206 and N365 each carry an N-linked (GlcNAc...) asparagine glycan. Residue D393 is the site of GPI-anchor amidated aspartate attachment. A propeptide spans 394–420 (removed in mature form); that stretch reads AGPPLSPAICLVPLLSALFVLWLCFSK.

Belongs to the repulsive guidance molecule (RGM) family. In terms of assembly, interacts with BMP2 and BMP4. Interacts with BMP6. Interacts with BMPR1B. Interacts with TMPRSS6. Autocatalytically cleaved at low pH; the two chains remain linked via two disulfide bonds. Also proteolytically processed by TMPRSS6, several fragments being released in the extracellular space; regulates HJV activity in BMP signaling and thefore iron homeostasis. In terms of tissue distribution, muscle cell lineage.

It localises to the cell membrane. Its function is as follows. Acts as a bone morphogenetic protein (BMP) coreceptor. Through enhancement of BMP signaling regulates hepcidin (HAMP) expression and regulates iron homeostasis. This is Hemojuvelin from Mus musculus (Mouse).